The sequence spans 242 residues: 3-dehydroquinate dehydratase (242 aa).

Residues 39–41 (EIR) and arginine 73 each bind 3-dehydroquinate. Histidine 135 functions as the Proton donor/acceptor in the catalytic mechanism. Lysine 162 functions as the Schiff-base intermediate with substrate in the catalytic mechanism. Positions 203 and 228 each coordinate 3-dehydroquinate.

This sequence belongs to the type-I 3-dehydroquinase family. In terms of assembly, homodimer.

The enzyme catalyses 3-dehydroquinate = 3-dehydroshikimate + H2O. It functions in the pathway metabolic intermediate biosynthesis; chorismate biosynthesis; chorismate from D-erythrose 4-phosphate and phosphoenolpyruvate: step 3/7. Its function is as follows. Involved in the third step of the chorismate pathway, which leads to the biosynthesis of aromatic amino acids. Catalyzes the cis-dehydration of 3-dehydroquinate (DHQ) and introduces the first double bond of the aromatic ring to yield 3-dehydroshikimate. The sequence is that of 3-dehydroquinate dehydratase from Methanosarcina barkeri (strain Fusaro / DSM 804).